A 491-amino-acid chain; its full sequence is Aspartyl/glutamyl-tRNA(Asn/Gln) amidotransferase subunit B (491 aa).

Belongs to the GatB/GatE family. GatB subfamily. As to quaternary structure, heterotrimer of A, B and C subunits.

The enzyme catalyses L-glutamyl-tRNA(Gln) + L-glutamine + ATP + H2O = L-glutaminyl-tRNA(Gln) + L-glutamate + ADP + phosphate + H(+). It carries out the reaction L-aspartyl-tRNA(Asn) + L-glutamine + ATP + H2O = L-asparaginyl-tRNA(Asn) + L-glutamate + ADP + phosphate + 2 H(+). Its function is as follows. Allows the formation of correctly charged Asn-tRNA(Asn) or Gln-tRNA(Gln) through the transamidation of misacylated Asp-tRNA(Asn) or Glu-tRNA(Gln) in organisms which lack either or both of asparaginyl-tRNA or glutaminyl-tRNA synthetases. The reaction takes place in the presence of glutamine and ATP through an activated phospho-Asp-tRNA(Asn) or phospho-Glu-tRNA(Gln). The sequence is that of Aspartyl/glutamyl-tRNA(Asn/Gln) amidotransferase subunit B from Prochlorococcus marinus (strain NATL2A).